A 555-amino-acid polypeptide reads, in one-letter code: mRNA cleavage and polyadenylation factor CLP1 (555 aa).

Residues Glu30, Lys69, and 156-161 (YLGKTS) contribute to the ATP site. The interval 431–451 (DDFEHITNEDENGGDGNDGDG) is disordered.

Belongs to the Clp1 family. Clp1 subfamily. Component of a pre-mRNA cleavage factor complex. Interacts directly with PCF11.

The protein resides in the nucleus. Its function is as follows. Required for endonucleolytic cleavage during polyadenylation-dependent pre-mRNA 3'-end formation. This is mRNA cleavage and polyadenylation factor CLP1 from Lodderomyces elongisporus (strain ATCC 11503 / CBS 2605 / JCM 1781 / NBRC 1676 / NRRL YB-4239) (Yeast).